Here is an 844-residue protein sequence, read N- to C-terminus: RING finger containing E3 ubiquitin-protein ligase WSV222 (844 aa).

229–236 (AEDDKGKT) contributes to the ATP binding site. The segment at 308 to 359 (CGVCATSVEEDENEGKTTSLSWYQMNCKHYIHCECLMGMCAAAGNVQCPMCR) adopts an RING-type; atypical zinc-finger fold.

In terms of assembly, interacts with host UBE2E1/UBCH6; this interaction results in WSV222 auto-ubiquitination. Interacts with host tumor suppressor-like protein.

It carries out the reaction S-ubiquitinyl-[E2 ubiquitin-conjugating enzyme]-L-cysteine + [acceptor protein]-L-lysine = [E2 ubiquitin-conjugating enzyme]-L-cysteine + N(6)-ubiquitinyl-[acceptor protein]-L-lysine.. Its pathway is protein modification; protein ubiquitination. Probable E3 ubiquitin-protein ligase which accepts ubiquitin from the E2 ubiquitin-conjugating enzyme UBE2E1/UBCH6 in the form of a thioester and then directly transfers the ubiquitin to targeted substrates. Mediates ubiquitination of host tumor-suppressor-like protein (TSL) targeting it for degradation. Might function as an anti-apoptosis protein by counteracting TSL-induced apoptosis. This White spot syndrome virus (isolate Shrimp/China/Tongan/1996) (WSSV) protein is RING finger containing E3 ubiquitin-protein ligase WSV222.